A 195-amino-acid chain; its full sequence is MYRIVLGKVSTLSAAPLPPGLREQAPQGPRRERWLAGRALLSHTLSPLPEIIYGEQGKPAFAPEMPLWFNLSHSGDDIALLLSDEGEVGCDIEVIRPRANWRWLANAVFSLGEHAEMDAVHPDQQLEMFWRIWTRKEAIVKQRGGSAWQIVSVDSTYHSSLSVSHCQLENLSLAICTPTPFTLTADSVQWIDSVN.

The protein belongs to the P-Pant transferase superfamily. Gsp/Sfp/HetI/AcpT family.

The enzyme catalyses apo-[ACP] + CoA = holo-[ACP] + adenosine 3',5'-bisphosphate + H(+). In terms of biological role, may be involved in an alternative pathway for phosphopantetheinyl transfer and holo-ACP synthesis in E.coli. The native apo-protein substrate is unknown. Is able to functionally replace AcpS in vivo but only when expressed at high levels. In Escherichia coli (strain K12), this protein is 4'-phosphopantetheinyl transferase AcpT.